We begin with the raw amino-acid sequence, 478 residues long: Sulfate adenylyltransferase subunit 1 (478 aa).

Residues 24 to 240 (KSMLRFLTCG…VLEDIDIDAD (217 aa)) enclose the tr-type G domain. Residues 33 to 40 (GSVDDGKS) form a G1 region. Position 33 to 40 (33 to 40 (GSVDDGKS)) interacts with GTP. Residues 91-95 (GITID) are G2. The tract at residues 112 to 115 (DTPG) is G3. GTP contacts are provided by residues 112–116 (DTPGH) and 167–170 (NKMD). The tract at residues 167–170 (NKMD) is G4. Residues 206–208 (SAL) are G5.

Belongs to the TRAFAC class translation factor GTPase superfamily. Classic translation factor GTPase family. CysN/NodQ subfamily. Heterodimer composed of CysD, the smaller subunit, and CysN.

It catalyses the reaction sulfate + ATP + H(+) = adenosine 5'-phosphosulfate + diphosphate. The protein operates within sulfur metabolism; hydrogen sulfide biosynthesis; sulfite from sulfate: step 1/3. Its function is as follows. With CysD forms the ATP sulfurylase (ATPS) that catalyzes the adenylation of sulfate producing adenosine 5'-phosphosulfate (APS) and diphosphate, the first enzymatic step in sulfur assimilation pathway. APS synthesis involves the formation of a high-energy phosphoric-sulfuric acid anhydride bond driven by GTP hydrolysis by CysN coupled to ATP hydrolysis by CysD. The polypeptide is Sulfate adenylyltransferase subunit 1 (Aliivibrio salmonicida (strain LFI1238) (Vibrio salmonicida (strain LFI1238))).